The chain runs to 278 residues: Undecaprenyl-diphosphatase 2 (278 aa).

Transmembrane regions (helical) follow at residues 43–63, 88–108, 119–139, 149–169, 194–214, 226–246, and 254–274; these read GAAF…VYFW, ARLG…GLFF, LYIT…ADRI, LIWR…IPGV, FLLA…KSIG, LATL…LKLV, and FVWY…TGVI.

This sequence belongs to the UppP family.

The protein resides in the cell inner membrane. It catalyses the reaction di-trans,octa-cis-undecaprenyl diphosphate + H2O = di-trans,octa-cis-undecaprenyl phosphate + phosphate + H(+). Catalyzes the dephosphorylation of undecaprenyl diphosphate (UPP). Confers resistance to bacitracin. This chain is Undecaprenyl-diphosphatase 2, found in Agrobacterium fabrum (strain C58 / ATCC 33970) (Agrobacterium tumefaciens (strain C58)).